The chain runs to 171 residues: UPF0398 protein MGAS9429_Spy1349 (171 aa).

It belongs to the UPF0398 family.

This is UPF0398 protein MGAS9429_Spy1349 from Streptococcus pyogenes serotype M12 (strain MGAS9429).